The sequence spans 117 residues: Appetite-regulating hormone (117 aa).

Residues 1 to 23 form the signal peptide; it reads MPSPGTVCSLLLLGMLWLDLAMA. Ser26 carries the O-decanoyl serine; alternate lipid modification. Residue Ser26 is the site of O-hexanoyl serine; alternate attachment. Residue Ser26 is the site of O-octanoyl serine; alternate attachment. Positions 29–67 are disordered; that stretch reads SPEHQRAQQRKESKKPPAKLQPRALGGWLRPEDGDQAEG. Basic and acidic residues predominate over residues 31–43; that stretch reads EHQRAQQRKESKK. A propeptide spans 52–75 (removed in mature form); that stretch reads ALGGWLRPEDGDQAEGAEDELEIQ. A Leucine amide modification is found at Leu98. A propeptide spans 99–117 (removed in mature form); sequence GKFLQDILWEEAKEAPADK.

The protein belongs to the motilin family. In terms of processing, O-octanoylated by GOAT/MBOAT4. O-octanoylation is essential for ghrelin activity. Amidation of Leu-98 is essential for obestatin activity.

It localises to the secreted. Ghrelin is the ligand for growth hormone secretagogue receptor type 1 (GHSR). Induces the release of growth hormone from the pituitary. Has an appetite-stimulating effect, induces adiposity and stimulates gastric acid secretion. Involved in growth regulation. In terms of biological role, obestatin may be the ligand for GPR39. May have an appetite-reducing effect resulting in decreased food intake. May reduce gastric emptying activity and jejunal motility. The polypeptide is Appetite-regulating hormone (GHRL) (Papio hamadryas (Hamadryas baboon)).